We begin with the raw amino-acid sequence, 122 residues long: Large ribosomal subunit protein uL14 (122 aa).

Belongs to the universal ribosomal protein uL14 family. As to quaternary structure, part of the 50S ribosomal subunit. Forms a cluster with proteins L3 and L19. In the 70S ribosome, L14 and L19 interact and together make contacts with the 16S rRNA in bridges B5 and B8.

In terms of biological role, binds to 23S rRNA. Forms part of two intersubunit bridges in the 70S ribosome. The sequence is that of Large ribosomal subunit protein uL14 from Chromobacterium violaceum (strain ATCC 12472 / DSM 30191 / JCM 1249 / CCUG 213 / NBRC 12614 / NCIMB 9131 / NCTC 9757 / MK).